The primary structure comprises 135 residues: GNTYSANNKQQTDIEQLMPKYNSTFAKMNGNYSYKLIWDDSMVSDALQEAKEQYSTNATFKIRRRKVFIKGDNATMEEKVEGALKYPVLRADKFLRRLLWFTHYACNGYYDTKGGHDVLTVACLYREIDYKNSHY.

An N-terminal signal peptide occupies residues 1–5 (GNTYS). Asn-22, Asn-31, Asn-57, and Asn-73 each carry an N-linked (GlcNAc...) asparagine glycan.

This sequence to H.contortus 15 kDa excretory/secretory protein.

The protein resides in the secreted. The sequence is that of 30 kDa antigenic glycoprotein from Trichostrongylus colubriformis (Black scour worm).